The sequence spans 221 residues: GTP cyclohydrolase III (221 aa).

It belongs to the archaeal-type GTP cyclohydrolase family.

It carries out the reaction GTP + 3 H2O = 2-amino-5-formylamino-6-(5-phospho-D-ribosylamino)pyrimidin-4(3H)-one + 2 phosphate + 2 H(+). Catalyzes the formation of 2-amino-5-formylamino-6-ribofuranosylamino-4(3H)-pyrimidinone ribonucleotide monophosphate and inorganic phosphate from GTP. Also has an independent pyrophosphate phosphohydrolase activity. This Pyrobaculum arsenaticum (strain DSM 13514 / JCM 11321 / PZ6) protein is GTP cyclohydrolase III.